An 87-amino-acid polypeptide reads, in one-letter code: Small ribosomal subunit protein bS18 (87 aa).

Residues 1 to 10 show a composition bias toward basic and acidic residues; it reads MAGKSSGDRR. Positions 1 to 23 are disordered; that stretch reads MAGKSSGDRRKLLRGAKVGKNAA.

Belongs to the bacterial ribosomal protein bS18 family. Part of the 30S ribosomal subunit. Forms a tight heterodimer with protein bS6.

Its function is as follows. Binds as a heterodimer with protein bS6 to the central domain of the 16S rRNA, where it helps stabilize the platform of the 30S subunit. The sequence is that of Small ribosomal subunit protein bS18 from Clavibacter sepedonicus (Clavibacter michiganensis subsp. sepedonicus).